The sequence spans 484 residues: BPI fold-containing family B member 1 (484 aa).

A signal peptide spans 1-21 (MAGPWTFTLLCGLLAATLIQA). N48 is a glycosylation site (N-linked (GlcNAc...) asparagine). A disulfide bridge links C158 with C201. N-linked (GlcNAc...) asparagine glycans are attached at residues N264 and N401.

The protein belongs to the BPI/LBP/Plunc superfamily. Plunc family. As to expression, detected in duodenum mucosal crypts of cholera patients, near Paneth cells (at protein level). Detected in trachea, nasal septal epithelium and lung.

It is found in the secreted. Functionally, may play a role in innate immunity in mouth, nose and lungs. Binds bacterial lipopolysaccharide (LPS) and modulates the cellular responses to LPS. In Homo sapiens (Human), this protein is BPI fold-containing family B member 1 (BPIFB1).